We begin with the raw amino-acid sequence, 415 residues long: Succinate--CoA ligase [GDP-forming] subunit beta, mitochondrial (415 aa).

The transit peptide at 1 to 19 directs the protein to the mitochondrion; the sequence is MLRAAGNLSKSMMKSQRRF. In terms of domain architecture, ATP-grasp spans 28 to 258; sequence KEILEKHGCS…SAAYRQKEIF (231 aa). GTP is bound by residues Q39, 72 to 74, and V130; that span reads GRG. Mg(2+) is bound by residues N227 and D241. Residues N292 and 349-351 contribute to the substrate site; that span reads GIV.

This sequence belongs to the succinate/malate CoA ligase beta subunit family. GTP-specific subunit beta subfamily. As to quaternary structure, heterodimer of an alpha and a beta subunit. The beta subunit determines specificity for GTP. Requires Mg(2+) as cofactor.

It is found in the mitochondrion. The enzyme catalyses GTP + succinate + CoA = succinyl-CoA + GDP + phosphate. Its pathway is carbohydrate metabolism; tricarboxylic acid cycle; succinate from succinyl-CoA (ligase route): step 1/1. GTP-specific succinyl-CoA synthetase functions in the citric acid cycle (TCA), coupling the hydrolysis of succinyl-CoA to the synthesis of GTP and thus represents the only step of substrate-level phosphorylation in the TCA. The beta subunit provides nucleotide specificity of the enzyme and binds the substrate succinate, while the binding sites for coenzyme A and phosphate are found in the alpha subunit. The polypeptide is Succinate--CoA ligase [GDP-forming] subunit beta, mitochondrial (Caenorhabditis elegans).